Reading from the N-terminus, the 191-residue chain is Protein GrpE (191 aa).

Belongs to the GrpE family. In terms of assembly, homodimer.

The protein resides in the cytoplasm. Participates actively in the response to hyperosmotic and heat shock by preventing the aggregation of stress-denatured proteins, in association with DnaK and GrpE. It is the nucleotide exchange factor for DnaK and may function as a thermosensor. Unfolded proteins bind initially to DnaJ; upon interaction with the DnaJ-bound protein, DnaK hydrolyzes its bound ATP, resulting in the formation of a stable complex. GrpE releases ADP from DnaK; ATP binding to DnaK triggers the release of the substrate protein, thus completing the reaction cycle. Several rounds of ATP-dependent interactions between DnaJ, DnaK and GrpE are required for fully efficient folding. The polypeptide is Protein GrpE (Listeria welshimeri serovar 6b (strain ATCC 35897 / DSM 20650 / CCUG 15529 / CIP 8149 / NCTC 11857 / SLCC 5334 / V8)).